A 385-amino-acid polypeptide reads, in one-letter code: Benzoate O-methyltransferase (385 aa).

An S-adenosyl-L-homocysteine-binding site is contributed by tyrosine 18. Glutamine 25 is a benzoate binding site. 6 residues coordinate S-adenosyl-L-homocysteine: cysteine 59, asparagine 64, aspartate 106, leucine 107, serine 145, and tyrosine 146. Benzoate is bound at residue tryptophan 167. Mg(2+)-binding residues include asparagine 184, glutamate 270, phenylalanine 272, and asparagine 273.

It belongs to the methyltransferase superfamily. Type-7 methyltransferase family. SABATH subfamily. Mg(2+) is required as a cofactor.

The enzyme catalyses benzoate + S-adenosyl-L-methionine = methyl benzoate + S-adenosyl-L-homocysteine. In terms of biological role, methyltransferase involved in the biosynthesis of methyl benzoate in response to stresses. Utilizes exclusively benzoic acid (BA) as substrate. This is Benzoate O-methyltransferase (OMT8) from Zea mays (Maize).